The chain runs to 399 residues: Glutamine synthetase 1, mitochondrial (399 aa).

Residues 1 to 27 constitute a mitochondrion transit peptide; it reads MALRVAGLFLKKELVAPATQQLRLLRT. The region spanning 62-143 is the GS beta-grasp domain; the sequence is VQATYLWIDG…VLCDTYSADG (82 aa). A GS catalytic domain is found at 150-399; that stretch reads KRAAFQAAID…AIVRTCLLNE (250 aa).

Belongs to the glutamine synthetase family. Homooctamer.

The protein resides in the mitochondrion. The catalysed reaction is L-glutamate + NH4(+) + ATP = L-glutamine + ADP + phosphate + H(+). This chain is Glutamine synthetase 1, mitochondrial (Gs1), found in Drosophila melanogaster (Fruit fly).